A 1383-amino-acid polypeptide reads, in one-letter code: DNA-directed RNA polymerase subunit beta'' (1383 aa).

Residues Cys-220, Cys-289, Cys-296, and Cys-299 each contribute to the Zn(2+) site.

Belongs to the RNA polymerase beta' chain family. RpoC2 subfamily. In terms of assembly, in plastids the minimal PEP RNA polymerase catalytic core is composed of four subunits: alpha, beta, beta', and beta''. When a (nuclear-encoded) sigma factor is associated with the core the holoenzyme is formed, which can initiate transcription. It depends on Zn(2+) as a cofactor.

It is found in the plastid. The protein resides in the chloroplast. The catalysed reaction is RNA(n) + a ribonucleoside 5'-triphosphate = RNA(n+1) + diphosphate. In terms of biological role, DNA-dependent RNA polymerase catalyzes the transcription of DNA into RNA using the four ribonucleoside triphosphates as substrates. This chain is DNA-directed RNA polymerase subunit beta'', found in Oenothera biennis (German evening primrose).